A 372-amino-acid polypeptide reads, in one-letter code: Homeobox protein Nkx-2.1 (372 aa).

The segment at residues Arg-161–Ala-220 is a DNA-binding region (homeobox). 3 disordered regions span residues Gln-219–Arg-258, Lys-269–Gln-288, and Ala-312–Gly-340. Gly residues predominate over residues Ser-233–Gly-244. Positions Cys-245–Gln-254 are enriched in low complexity. Ser-255 is modified (phosphoserine). Residues Ala-273–Gln-288 are compositionally biased toward low complexity.

This sequence belongs to the NK-2 homeobox family. In terms of assembly, interacts with WWTR1. Phosphorylated on serine residues by STK3/MST2. Thyroid, lung and brain.

Its subcellular location is the nucleus. In terms of biological role, transcription factor that binds and activates the promoter of thyroid specific genes such as thyroglobulin, thyroperoxidase, and thyrotropin receptor. Crucial in the maintenance of the thyroid differentiation phenotype. May play a role in lung development and surfactant homeostasis. Forms a regulatory loop with GRHL2 that coordinates lung epithelial cell morphogenesis and differentiation. Activates the transcription of GNRHR and plays a role in enhancing the circadian oscillation of its gene expression. Represses the transcription of the circadian transcriptional repressor NR1D1. This is Homeobox protein Nkx-2.1 from Mus musculus (Mouse).